The primary structure comprises 334 residues: F-box protein AUF1 (334 aa).

The 49-residue stretch at 1-49 (MDAFDAIPDPVVIDILNRVGDVKTLIRCRSVSKRFNSLATQSESLLLQL) folds into the F-box domain.

In terms of assembly, part of a SCF (ASK-cullin-F-box) protein ligase complex. Interacts with SKP1A/ASK1, SKP1B/ASK2, ASK11 and ASK13.

It localises to the nucleus. The protein operates within protein modification; protein ubiquitination. Functionally, component of SCF(ASK-cullin-F-box) E3 ubiquitin ligase complexes, which may mediate the ubiquitination and subsequent proteasomal degradation of target proteins. Involved in the control of basipetal and acropetal auxin transport by promoting the distribution and expression of the auxin transporter PIN2. Promotes cytokinin-mediated cell expansion in the root elongation and differentiation zone, without affecting root cell division. The polypeptide is F-box protein AUF1 (Arabidopsis thaliana (Mouse-ear cress)).